A 159-amino-acid chain; its full sequence is Cytochrome c-type biogenesis protein CcmE (159 aa).

Topologically, residues 1 to 8 (MNPRRKKR) are cytoplasmic. A helical; Signal-anchor for type II membrane protein membrane pass occupies residues 9–29 (LLVIVAVLFGIGASIGLVLYA). Residues 30 to 159 (LQENINLFYT…KPKYNLDSGN (130 aa)) are Periplasmic-facing. His130 and Tyr134 together coordinate heme.

The protein belongs to the CcmE/CycJ family.

It is found in the cell inner membrane. Functionally, heme chaperone required for the biogenesis of c-type cytochromes. Transiently binds heme delivered by CcmC and transfers the heme to apo-cytochromes in a process facilitated by CcmF and CcmH. This chain is Cytochrome c-type biogenesis protein CcmE, found in Pseudoalteromonas translucida (strain TAC 125).